The following is a 244-amino-acid chain: Glutathione S-transferase theta-2 (244 aa).

Positions 2-82 (GLELFLDLVS…YLSCKYQTPD (81 aa)) constitute a GST N-terminal domain. Glutathione-binding positions include 40–41 (HK), 53–54 (KL), 66–67 (ES), and 104–107 (DCIR). One can recognise a GST C-terminal domain in the interval 88–224 (DLQARARVHE…SILEQAAKKT (137 aa)).

The protein belongs to the GST superfamily. Theta family. As to quaternary structure, homodimer. In terms of tissue distribution, expressed at low levels in liver. In lung, expressed at low levels in ciliated bronchiolar cells, alveolar macrophages and alveolar type II cells.

It localises to the cytoplasm. Its subcellular location is the cytosol. The protein resides in the nucleus. It catalyses the reaction RX + glutathione = an S-substituted glutathione + a halide anion + H(+). Its function is as follows. Conjugation of reduced glutathione to a wide number of exogenous and endogenous hydrophobic electrophiles. Has a sulfatase activity. This is Glutathione S-transferase theta-2 (GSTT2) from Homo sapiens (Human).